Here is a 206-residue protein sequence, read N- to C-terminus: High frequency lysogenization protein HflD homolog (206 aa).

It belongs to the HflD family.

It is found in the cytoplasm. The protein resides in the cell inner membrane. The sequence is that of High frequency lysogenization protein HflD homolog from Pseudomonas savastanoi pv. phaseolicola (strain 1448A / Race 6) (Pseudomonas syringae pv. phaseolicola (strain 1448A / Race 6)).